Consider the following 109-residue polypeptide: Large ribosomal subunit protein uL22 (109 aa).

Belongs to the universal ribosomal protein uL22 family. Part of the 50S ribosomal subunit.

Its function is as follows. This protein binds specifically to 23S rRNA; its binding is stimulated by other ribosomal proteins, e.g. L4, L17, and L20. It is important during the early stages of 50S assembly. It makes multiple contacts with different domains of the 23S rRNA in the assembled 50S subunit and ribosome. Functionally, the globular domain of the protein is located near the polypeptide exit tunnel on the outside of the subunit, while an extended beta-hairpin is found that lines the wall of the exit tunnel in the center of the 70S ribosome. The polypeptide is Large ribosomal subunit protein uL22 (Methylobacillus flagellatus (strain ATCC 51484 / DSM 6875 / VKM B-1610 / KT)).